Reading from the N-terminus, the 442-residue chain is Thymidine phosphorylase (442 aa).

The protein belongs to the thymidine/pyrimidine-nucleoside phosphorylase family. In terms of assembly, homodimer.

It catalyses the reaction thymidine + phosphate = 2-deoxy-alpha-D-ribose 1-phosphate + thymine. It functions in the pathway pyrimidine metabolism; dTMP biosynthesis via salvage pathway; dTMP from thymine: step 1/2. Functionally, the enzymes which catalyze the reversible phosphorolysis of pyrimidine nucleosides are involved in the degradation of these compounds and in their utilization as carbon and energy sources, or in the rescue of pyrimidine bases for nucleotide synthesis. This is Thymidine phosphorylase from Vibrio vulnificus (strain CMCP6).